The chain runs to 128 residues: uncharacterized protein (128 aa).

Residues 1-24 (MKMTKLTTLLLTATLGLASGAALA) form the signal peptide. Composition is skewed to low complexity over residues 24-44 (AAES…NAGQ) and 52-70 (NVAP…GNTN). The tract at residues 24 to 128 (AAESNAQSSN…VNTKTDGTTQ (105 aa)) is disordered. Residues 71 to 82 (STMQHPDGSTMN) are compositionally biased toward polar residues. Over residues 85 to 110 (GMTKDEEHKNTMCKDGRCPDINKKVE) the composition is skewed to basic and acidic residues. Residues 113–128 (NGVNNDVNTKTDGTTQ) show a composition bias toward polar residues.

This is an uncharacterized protein from Salmonella typhi.